Here is a 199-residue protein sequence, read N- to C-terminus: MSKVLVLYYSTYGHVEALAEAVAEGARATGATVDVKRVPETVPAAVAEASHFKVDQKAPVATVEDLANYDAIVVGTPTRFGRISSQMAAFLDQAGGLWMRGVLNGKVGGAFTSTATQHGGQEATLFSIIANLLHFGMTIVGLPYSHQGQMTLDEIVGGSPYGATTIAGGQGQRQPSAIELEGARHQGELIAKTANKLFG.

The 187-residue stretch at Val4–Ile190 folds into the Flavodoxin-like domain. FMN-binding positions include Ser10–Val15 and Thr78–Phe80. NAD(+) is bound at residue Tyr12. Position 98 (Trp98) interacts with substrate. FMN contacts are provided by residues Ser113 to Gly119 and His134.

The protein belongs to the WrbA family. It depends on FMN as a cofactor.

It carries out the reaction a quinone + NADH + H(+) = a quinol + NAD(+). The catalysed reaction is a quinone + NADPH + H(+) = a quinol + NADP(+). The chain is NAD(P)H dehydrogenase (quinone) from Cupriavidus metallidurans (strain ATCC 43123 / DSM 2839 / NBRC 102507 / CH34) (Ralstonia metallidurans).